A 462-amino-acid polypeptide reads, in one-letter code: L-seryl-tRNA(Sec) selenium transferase (462 aa).

Lysine 293 carries the N6-(pyridoxal phosphate)lysine modification.

It belongs to the SelA family. Pyridoxal 5'-phosphate serves as cofactor.

It localises to the cytoplasm. It catalyses the reaction L-seryl-tRNA(Sec) + selenophosphate + H(+) = L-selenocysteinyl-tRNA(Sec) + phosphate. It functions in the pathway aminoacyl-tRNA biosynthesis; selenocysteinyl-tRNA(Sec) biosynthesis; selenocysteinyl-tRNA(Sec) from L-seryl-tRNA(Sec) (bacterial route): step 1/1. In terms of biological role, converts seryl-tRNA(Sec) to selenocysteinyl-tRNA(Sec) required for selenoprotein biosynthesis. This chain is L-seryl-tRNA(Sec) selenium transferase, found in Clostridium botulinum (strain 657 / Type Ba4).